A 235-amino-acid chain; its full sequence is Peptidase E (235 aa).

Active-site charge relay system residues include serine 122, aspartate 137, and histidine 159.

The protein belongs to the peptidase S51 family.

It is found in the cytoplasm. It catalyses the reaction Dipeptidase E catalyzes the hydrolysis of dipeptides Asp-|-Xaa. It does not act on peptides with N-terminal Glu, Asn or Gln, nor does it cleave isoaspartyl peptides.. Its function is as follows. Hydrolyzes dipeptides containing N-terminal aspartate residues. May play a role in allowing the cell to use peptide aspartate to spare carbon otherwise required for the synthesis of the aspartate family of amino acids. The polypeptide is Peptidase E (Shewanella amazonensis (strain ATCC BAA-1098 / SB2B)).